A 312-amino-acid chain; its full sequence is Malate dehydrogenase (312 aa).

Residues 7–13 (GAAGGIG) and Asp34 each bind NAD(+). Substrate-binding residues include Arg81 and Arg87. Residues Asn94 and 117–119 (ITN) each bind NAD(+). Substrate contacts are provided by Asn119 and Arg153. His177 functions as the Proton acceptor in the catalytic mechanism. Residue Met227 participates in NAD(+) binding.

It belongs to the LDH/MDH superfamily. MDH type 1 family. Homodimer.

The catalysed reaction is (S)-malate + NAD(+) = oxaloacetate + NADH + H(+). In terms of biological role, catalyzes the reversible oxidation of malate to oxaloacetate. This chain is Malate dehydrogenase, found in Klebsiella pneumoniae (strain 342).